Consider the following 308-residue polypeptide: MSAQKPGLHPRNRHQHRYDLAALCQTTPELTSFLIRTPAGEQSVDFANPQAVKALNKALLAHFYAVTHWDIPPGFLCPPVPGRADYIHHLADLLGETTGSIPAQATILDVGVGANCIYPLIGVHEYGWRFTGSEVSDAAMSSAQAIIQANTGLSRAIRLRRQKDPAAIFTGIIHKNEFYDATLCNPPFHDSAAAARAGSERKRRNLGQNKDDALNFGGQQQELWCEGGEVAFIKKMIAESQTFRRQVLWFTTLVSRGENLPPLYRALTEAGAVKVVKKEMAQGQKQSRFIAWTFMDDDQRRRFITRKR.

Belongs to the methyltransferase superfamily. METTL16/RlmF family.

It is found in the cytoplasm. It catalyses the reaction adenosine(1618) in 23S rRNA + S-adenosyl-L-methionine = N(6)-methyladenosine(1618) in 23S rRNA + S-adenosyl-L-homocysteine + H(+). Its function is as follows. Specifically methylates the adenine in position 1618 of 23S rRNA. This chain is Ribosomal RNA large subunit methyltransferase F, found in Salmonella paratyphi A (strain ATCC 9150 / SARB42).